The primary structure comprises 113 residues: UPF0102 protein Dgeo_1894 (113 aa).

This sequence belongs to the UPF0102 family.

In Deinococcus geothermalis (strain DSM 11300 / CIP 105573 / AG-3a), this protein is UPF0102 protein Dgeo_1894.